The following is a 400-amino-acid chain: Argininosuccinate synthase (400 aa).

ATP is bound by residues 10 to 18 (AYSGGVDTS) and alanine 38. Tyrosine 89 contributes to the L-citrulline binding site. Glycine 119 is an ATP binding site. Positions 121, 125, and 126 each coordinate L-aspartate. Residue asparagine 125 coordinates L-citrulline. L-citrulline is bound by residues arginine 129, serine 177, serine 186, glutamate 262, and tyrosine 274.

It belongs to the argininosuccinate synthase family. Type 1 subfamily. Homotetramer.

It is found in the cytoplasm. It carries out the reaction L-citrulline + L-aspartate + ATP = 2-(N(omega)-L-arginino)succinate + AMP + diphosphate + H(+). Its pathway is amino-acid biosynthesis; L-arginine biosynthesis; L-arginine from L-ornithine and carbamoyl phosphate: step 2/3. The sequence is that of Argininosuccinate synthase from Nostoc sp. (strain PCC 7120 / SAG 25.82 / UTEX 2576).